We begin with the raw amino-acid sequence, 449 residues long: Glutamate--tRNA ligase (449 aa).

The 'HIGH' region signature appears at 10–20 (PSPTGFLHIGN). The 'KMSKS' region motif lies at 214-218 (KLSKR). Lysine 217 provides a ligand contact to ATP.

This sequence belongs to the class-I aminoacyl-tRNA synthetase family. Glutamate--tRNA ligase type 1 subfamily. As to quaternary structure, monomer.

It localises to the cytoplasm. The catalysed reaction is tRNA(Glu) + L-glutamate + ATP = L-glutamyl-tRNA(Glu) + AMP + diphosphate. In terms of biological role, catalyzes the attachment of glutamate to tRNA(Glu) in a two-step reaction: glutamate is first activated by ATP to form Glu-AMP and then transferred to the acceptor end of tRNA(Glu). In Onion yellows phytoplasma (strain OY-M), this protein is Glutamate--tRNA ligase.